We begin with the raw amino-acid sequence, 218 residues long: MAMFEQMRANVGKLLKGIDRYNPENLATLERYVETQAKENAYDLEANLAVLKLYQFNPAFFQTTVTAQILLKALTNLPHTDFTLCKCMIDQAHQEERPIRQILYLGDLLETCHFQAFWQALDENMDLLEGITGFEDSVRKFICHVVGITYQHIDRWLLAEMLGDLSDSQLKVWMSKYGWSADESGQIFICSQEESIKPKNIVEKIDFDSVSSIMASSQ.

The residue at position 2 (Ala-2) is an N-acetylalanine. A Phosphothreonine modification is found at Thr-28. Positions 42–204 (YDLEANLAVL…SIKPKNIVEK (163 aa)) constitute a PCI domain. Phosphoserine is present on Ser-217.

Component of the eukaryotic translation initiation factor 3 (eIF-3) complex, which is composed of 13 subunits: EIF3A, EIF3B, EIF3C, EIF3D, EIF3E, EIF3F, EIF3G, EIF3H, EIF3I, EIF3J, EIF3K, EIF3L and EIF3M. The eIF-3 complex appears to include 3 stable modules: module A is composed of EIF3A, EIF3B, EIF3G and EIF3I; module B is composed of EIF3F, EIF3H, and EIF3M; and module C is composed of EIF3C, EIF3D, EIF3E, EIF3K and EIF3L. EIF3C of module C binds EIF3B of module A and EIF3H of module B, thereby linking the three modules. EIF3J is a labile subunit that binds to the eIF-3 complex via EIF3B. The eIF-3 complex interacts with RPS6KB1 under conditions of nutrient depletion. Mitogenic stimulation leads to binding and activation of a complex composed of MTOR and RPTOR, leading to phosphorylation and release of RPS6KB1 and binding of EIF4B to eIF-3. Interacts with CCND3, but not with CCND1 and CCND2. As to expression, ubiquitous, with the highest levels of expression in brain, testis and kidney.

Its subcellular location is the nucleus. It localises to the cytoplasm. Functionally, component of the eukaryotic translation initiation factor 3 (eIF-3) complex, which is required for several steps in the initiation of protein synthesis. The eIF-3 complex associates with the 40S ribosome and facilitates the recruitment of eIF-1, eIF-1A, eIF-2:GTP:methionyl-tRNAi and eIF-5 to form the 43S pre-initiation complex (43S PIC). The eIF-3 complex stimulates mRNA recruitment to the 43S PIC and scanning of the mRNA for AUG recognition. The eIF-3 complex is also required for disassembly and recycling of post-termination ribosomal complexes and subsequently prevents premature joining of the 40S and 60S ribosomal subunits prior to initiation. The eIF-3 complex specifically targets and initiates translation of a subset of mRNAs involved in cell proliferation, including cell cycling, differentiation and apoptosis, and uses different modes of RNA stem-loop binding to exert either translational activation or repression. This chain is Eukaryotic translation initiation factor 3 subunit K, found in Homo sapiens (Human).